We begin with the raw amino-acid sequence, 100 residues long: Apolipoprotein C-II (100 aa).

A signal peptide spans 1 to 22 (MGSRFLLALFLVLLVLGCEVQA). Residues 66-74 (SVDEKLRDM) are lipid binding. A lipoprotein lipase cofactor region spans residues 78–100 (SSAAMTTYASIFTDQILTLLKGE).

The protein belongs to the apolipoprotein C2 family. Post-translationally, proapolipoprotein C-II is synthesized as a sialic acid containing glycoprotein which is subsequently desialylated prior to its proteolytic processing. Proapolipoprotein C-II, the major form found in plasma undergoes proteolytic cleavage of its N-terminal hexapeptide to generate the mature form apolipoprotein C-II, which occurs as the minor form in plasma.

Its subcellular location is the secreted. Component of chylomicrons, very low-density lipoproteins (VLDL), low-density lipoproteins (LDL), and high-density lipoproteins (HDL) in plasma. Plays an important role in lipoprotein metabolism as an activator of lipoprotein lipase. The protein is Apolipoprotein C-II (APOC2) of Ellobius talpinus (Northern mole vole).